The chain runs to 642 residues: Protein INCREASED PETAL GROWTH ANISOTROPY 1 (642 aa).

The disordered stretch occupies residues 1–60; sequence MVAGKVRVTMGFHKSPSTKKTKDMPSPLPLPPPPPPPLKPPSSGSATTKPPINPSKPGFT. Residues 26–40 are compositionally biased toward pro residues; sequence SPLPLPPPPPPPLKP. Positions 80 to 183 form a coiled coil; sequence AASHNGVVSE…EAEIVELRKL (104 aa). Positions 223–351 are disordered; the sequence is NLPEPITNQE…PPKSLSIASA (129 aa). Positions 247 to 256 are enriched in basic and acidic residues; sequence DIYRKDEIES. The segment covering 258–277 has biased composition (low complexity); the sequence is SRSSNSEELTESSSLSTVRS. Over residues 302–344 the composition is skewed to pro residues; the sequence is DPPPQKSIPPPPPPPPPPLLQQPPPPPSVSKAPPPPPPPPPPK.

Belongs to the IPGA1 family. Associates to cortical microtubules via its N-terminal region. Interacts with ANGUSTIFOLIA (AN) on microtubule upon mechanical stress to regulate microtubule organization. Binds to the microtubule-severing enzyme KATANIN (KTN1). In terms of tissue distribution, expressed ubiquitously at all development stages, with highest in developing petals. During mechanical stress, accumulates in granules on microtubules.

Its subcellular location is the cytoplasm. The protein localises to the cytoskeleton. It is found in the cytosol. It localises to the cell membrane. Its function is as follows. Microtubule-associated protein involved in the regulation of anisotropic petal and cotyledons growth and shape by affecting cortical microtubule organization. Prevents cortical microtubules organization into parallel arrays oriented perpendicular to the axis of cell elongation thus limiting anisotropic cell growth in the late phases of petal development. Cooperatively with ANGUSTIFOLIA (AN), negatively regulates cortical microtubules (CMTs) organization in response to mechanical stress and modulates pavement cells morphogenesis leading to puzzle shape, probably in an AAA1/KTN1-dependent manner. The protein is Protein INCREASED PETAL GROWTH ANISOTROPY 1 of Arabidopsis thaliana (Mouse-ear cress).